Here is a 171-residue protein sequence, read N- to C-terminus: Spiderine-2b (171 aa).

Positions 1–18 are cleaved as a signal peptide; that stretch reads MKFALVLLGFCAFYLVNA. The propeptide at 19-58 is removed in mature form; sequence TGDLETELEASDLQELQEALDLIAETPLESLEAEELEEAR. The interval 59–104 is linear cationic cytotoxin domain; sequence KFKFPKINWGKLASKAKDVYKKGQKLAKNKNVKKALKYGKQLAENL. The region spanning 118–171 is the Oxytoxin-type inhibitor cystine knot (ICK) domain; sequence NNKCWAIGTRCTDDCDCCPEHHCHCPAKSWTFGLIPCSCQVTESDKVNKCPPAE. 5 disulfides stabilise this stretch: Cys-121–Cys-135, Cys-128–Cys-140, Cys-132–Cys-167, Cys-134–Cys-156, and Cys-142–Cys-154.

Belongs to the spiderine family. Cationic/spiderine subfamily. Expressed by the venom gland.

It is found in the secreted. In terms of biological role, has antimicrobial, insecticidal, cytolytic and cytotoxic activity. This chain is Spiderine-2b, found in Oxyopes takobius (Lynx spider).